Reading from the N-terminus, the 247-residue chain is Chromosome partition protein MukE (247 aa).

The tract at residues 213–247 is disordered; sequence AQSLQEEKNGLKDNMDQSAVENEQYFENEENEGIA. Positions 217-227 are enriched in basic and acidic residues; that stretch reads QEEKNGLKDNM. Acidic residues predominate over residues 236–247; sequence QYFENEENEGIA.

The protein belongs to the MukE family. As to quaternary structure, interacts, and probably forms a ternary complex, with MukF and MukB. The complex formation is stimulated by calcium or magnesium.

The protein resides in the cytoplasm. It is found in the nucleoid. In terms of biological role, involved in chromosome condensation, segregation and cell cycle progression. May participate in facilitating chromosome segregation by condensation DNA from both sides of a centrally located replisome during cell division. Probably acts via its interaction with MukB and MukF. This chain is Chromosome partition protein MukE, found in Histophilus somni (strain 2336) (Haemophilus somnus).